A 426-amino-acid polypeptide reads, in one-letter code: MASPAPLQRLQAPLRRSLARAAVLSSRTYATIPSPSDPGLTQSSPSPAASTTPAKKAPRPSYFKDTTVASFSEFVGSQSAPLSLSEAYEIKTAEVGPAGRKRTITRLPEWLKTPIPSSGANPNFGKIKADLRGLNLHTVCEEARCPNIGECWGGNDKSAATATIMLMGDTCTRGCRFCSVKTNRKPPPLDPHEPENTAEALARWGLGYVVLTSVDRDDLADGGARHFAETIRRIKQKKPTLLVEALTGDFMGDLDMVKIVAESGLDVYAHNVETVEGLTPYVRDRRATFRQSLKVLEHVKAVRGKEGIITKTSIMLGLGEQEQEIWDTLRELRKIDVDVVTFGQYMRPTKRHLKVEKYVTPDEFDLWKQRALDMGFLYCASGPLVRSSYKAGEAFIENVLRKRAGERAAASASLDQVVAAEETKAL.

The transit peptide at 1–29 (MASPAPLQRLQAPLRRSLARAAVLSSRTY) directs the protein to the mitochondrion. Positions 27–42 (RTYATIPSPSDPGLTQ) are enriched in polar residues. Residues 27–61 (RTYATIPSPSDPGLTQSSPSPAASTTPAKKAPRPS) form a disordered region. Over residues 43 to 55 (SSPSPAASTTPAK) the composition is skewed to low complexity. The [4Fe-4S] cluster site is built by Cys-140, Cys-145, Cys-151, Cys-171, Cys-175, Cys-178, and Ser-388. The Radical SAM core domain occupies 154-377 (GNDKSAATAT…KQRALDMGFL (224 aa)).

Belongs to the radical SAM superfamily. Lipoyl synthase family. The cofactor is [4Fe-4S] cluster.

The protein resides in the mitochondrion. The catalysed reaction is [[Fe-S] cluster scaffold protein carrying a second [4Fe-4S](2+) cluster] + N(6)-octanoyl-L-lysyl-[protein] + 2 oxidized [2Fe-2S]-[ferredoxin] + 2 S-adenosyl-L-methionine + 4 H(+) = [[Fe-S] cluster scaffold protein] + N(6)-[(R)-dihydrolipoyl]-L-lysyl-[protein] + 4 Fe(3+) + 2 hydrogen sulfide + 2 5'-deoxyadenosine + 2 L-methionine + 2 reduced [2Fe-2S]-[ferredoxin]. The protein operates within protein modification; protein lipoylation via endogenous pathway; protein N(6)-(lipoyl)lysine from octanoyl-[acyl-carrier-protein]: step 2/2. Its function is as follows. Catalyzes the radical-mediated insertion of two sulfur atoms into the C-6 and C-8 positions of the octanoyl moiety bound to the lipoyl domains of lipoate-dependent enzymes, thereby converting the octanoylated domains into lipoylated derivatives. This chain is Lipoyl synthase, mitochondrial, found in Podospora anserina (strain S / ATCC MYA-4624 / DSM 980 / FGSC 10383) (Pleurage anserina).